The following is a 100-amino-acid chain: MKITQEEVTHVANLSKLRFSEEETAAFATTLSKIVDMVELLGEVDTTGVAPTTTMADRKTVLRPDVVEEGTDRDRLFKNVPEQDNYYIKVPAILDDGGDA.

Belongs to the GatC family. In terms of assembly, heterotrimer of A, B and C subunits.

The enzyme catalyses L-glutamyl-tRNA(Gln) + L-glutamine + ATP + H2O = L-glutaminyl-tRNA(Gln) + L-glutamate + ADP + phosphate + H(+). It catalyses the reaction L-aspartyl-tRNA(Asn) + L-glutamine + ATP + H2O = L-asparaginyl-tRNA(Asn) + L-glutamate + ADP + phosphate + 2 H(+). In terms of biological role, allows the formation of correctly charged Asn-tRNA(Asn) or Gln-tRNA(Gln) through the transamidation of misacylated Asp-tRNA(Asn) or Glu-tRNA(Gln) in organisms which lack either or both of asparaginyl-tRNA or glutaminyl-tRNA synthetases. The reaction takes place in the presence of glutamine and ATP through an activated phospho-Asp-tRNA(Asn) or phospho-Glu-tRNA(Gln). The chain is Aspartyl/glutamyl-tRNA(Asn/Gln) amidotransferase subunit C from Streptococcus pneumoniae (strain Hungary19A-6).